Here is a 222-residue protein sequence, read N- to C-terminus: GTP cyclohydrolase 1 (222 aa).

3 residues coordinate Zn(2+): C111, H114, and C182.

Belongs to the GTP cyclohydrolase I family. Homomer.

It carries out the reaction GTP + H2O = 7,8-dihydroneopterin 3'-triphosphate + formate + H(+). It participates in cofactor biosynthesis; 7,8-dihydroneopterin triphosphate biosynthesis; 7,8-dihydroneopterin triphosphate from GTP: step 1/1. This Shigella boydii serotype 18 (strain CDC 3083-94 / BS512) protein is GTP cyclohydrolase 1.